We begin with the raw amino-acid sequence, 970 residues long: Type III restriction-modification enzyme EcoP15I Res subunit (970 aa).

A helicase-like domain region spans residues 75–540 (AKSNIIDVSM…EVGRGLRLPV (466 aa)). AMP is bound by residues threonine 91, glycine 122, phenylalanine 126, and aspartate 226. Residues 894-918 (TYSPDFAYVVKTAEGDYLNFIIETK) are endonuclease domain.

It belongs to the type III restriction-modification system Res protein family. As to quaternary structure, a heterotetramer with stoichiometry Res(2)Mod(2). A heterotrimer with stoichiometry Res(1)Mod(2). The cofactor is Mg(2+). It depends on S-adenosyl-L-methionine as a cofactor.

It carries out the reaction Endonucleolytic cleavage of DNA to give specific double-stranded fragments with terminal 5'-phosphates.. A type III restriction enzyme that recognizes 2 inversely oriented double-stranded sequences 5'-CAGCAG-3' and cleaves DNA 25-27 base pairs downstream of one site. DNA restriction requires both the Res and Mod subunits. DNA topology affects its action; relaxed and negatively supercoiled DNA are digested but positively supercoiled DNA is not a good substrate. Interacts with DNA approximately one half-turn downstream of the recognition site. After binding to one recognition site undergoes random one-dimensional diffusion along DNA until it collides with a stationary enzyme bound to the second DNA site, which is when DNA cleavage occurs. The polypeptide is Type III restriction-modification enzyme EcoP15I Res subunit (Escherichia coli).